Here is a 582-residue protein sequence, read N- to C-terminus: Calcium-dependent protein kinase 24 (582 aa).

The interval 1-36 is disordered; the sequence is MGSCVSSPLKGSPFGKRPVRRRHSSNSRTSSVPRFD. Glycine 2 carries the N-myristoyl glycine lipid modification. A Protein kinase domain is found at 66–324; the sequence is YDLGKELGRG…VQEVLEHPWI (259 aa). Residues 72–80 and lysine 95 each bind ATP; that span reads LGRGEFGVT. The Proton acceptor role is filled by aspartate 190. A Phosphoserine modification is found at serine 230. An autoinhibitory domain region spans residues 330–360; it reads APNVNLGDNVRTKIQQFLLMNRFKKKVLRIV. EF-hand domains are found at residues 367–402, 403–438, 439–474, and 478–513; these read EEIAAIVQMFQTMDTDKNGHLTFEELRDGLKKIGQV, VPDGDVKMLMDAADTDGNGMLSCDEFVTLSIHLKRM, GCDEHLQEAFKYFDKNGNGFIELDELKVALCDDKLG, and GNDQWIKDIFFDVDLNKDGRISFDEFKAMMKSGTDW. Residues aspartate 380, aspartate 382, asparagine 384, histidine 386, glutamate 391, aspartate 416, aspartate 418, asparagine 420, methionine 422, glutamate 427, aspartate 452, asparagine 454, asparagine 456, glutamate 463, aspartate 491, asparagine 493, aspartate 495, and arginine 497 each contribute to the Ca(2+) site. The residue at position 499 (serine 499) is a Phosphoserine. Glutamate 502 contacts Ca(2+).

This sequence belongs to the protein kinase superfamily. Ser/Thr protein kinase family. CDPK subfamily.

Its subcellular location is the membrane. The enzyme catalyses L-seryl-[protein] + ATP = O-phospho-L-seryl-[protein] + ADP + H(+). It catalyses the reaction L-threonyl-[protein] + ATP = O-phospho-L-threonyl-[protein] + ADP + H(+). Its activity is regulated as follows. Activated by calcium. Autophosphorylation may play an important role in the regulation of the kinase activity. Functionally, may play a role in signal transduction pathways that involve calcium as a second messenger. The chain is Calcium-dependent protein kinase 24 (CPK24) from Arabidopsis thaliana (Mouse-ear cress).